The following is a 328-amino-acid chain: Putative UDP-N-acetylglucosamine--dolichyl-phosphate N-acetylglucosaminephosphotransferase (328 aa).

9 helical membrane-spanning segments follow: residues 1 to 21 (MLVS…VTLI), 48 to 68 (VPVL…FTFL), 78 to 98 (IENV…LGLL), 107 to 127 (ATRA…SVGH), 129 to 149 (IISI…IIIL), 166 to 186 (LNGL…YIGL), 192 to 212 (SFYA…FLIF), 228 to 248 (FIGS…ALFF), and 301 to 321 (YHIV…AVVF).

This sequence belongs to the glycosyltransferase 4 family.

It localises to the cell membrane. The catalysed reaction is a di-trans,poly-cis-dolichyl phosphate + UDP-N-acetyl-alpha-D-glucosamine = an N-acetyl-alpha-D-glucosaminyl-diphospho-di-trans,poly-cis-dolichol + UMP. Its activity is regulated as follows. Inhibited by tunicamycin. This is Putative UDP-N-acetylglucosamine--dolichyl-phosphate N-acetylglucosaminephosphotransferase (gnpTA) from Sulfolobus acidocaldarius (strain ATCC 33909 / DSM 639 / JCM 8929 / NBRC 15157 / NCIMB 11770).